Reading from the N-terminus, the 209-residue chain is FMN-dependent NADH:quinone oxidoreductase (209 aa).

FMN is bound by residues S9 and 15-17 (SNS).

It belongs to the azoreductase type 1 family. Homodimer. The cofactor is FMN.

It catalyses the reaction 2 a quinone + NADH + H(+) = 2 a 1,4-benzosemiquinone + NAD(+). The enzyme catalyses N,N-dimethyl-1,4-phenylenediamine + anthranilate + 2 NAD(+) = 2-(4-dimethylaminophenyl)diazenylbenzoate + 2 NADH + 2 H(+). Quinone reductase that provides resistance to thiol-specific stress caused by electrophilic quinones. In terms of biological role, also exhibits azoreductase activity. Catalyzes the reductive cleavage of the azo bond in aromatic azo compounds to the corresponding amines. The polypeptide is FMN-dependent NADH:quinone oxidoreductase (Bordetella parapertussis (strain 12822 / ATCC BAA-587 / NCTC 13253)).